Reading from the N-terminus, the 262-residue chain is Aminoglycoside 3'-phosphotransferase (262 aa).

The active-site Proton acceptor is the Asp187.

This sequence belongs to the aminoglycoside phosphotransferase family. Monomer.

It is found in the cytoplasm. The catalysed reaction is kanamycin A + ATP = kanamycin 3'-phosphate + ADP + H(+). In terms of biological role, resistance to butirosin and structurally-related aminoglycosides, including kanamycin and amikacin. In Niallia circulans (Bacillus circulans), this protein is Aminoglycoside 3'-phosphotransferase.